Reading from the N-terminus, the 474-residue chain is Trehalose-6-phosphate synthase (474 aa).

R10 is a binding site for D-glucose 6-phosphate. G22 to G23 provides a ligand contact to UDP-alpha-D-glucose. 2 residues coordinate D-glucose 6-phosphate: Y77 and D131. The UDP-alpha-D-glucose site is built by R263 and K268. R301 lines the D-glucose 6-phosphate pocket. Residues F340 and L366 to E370 each bind UDP-alpha-D-glucose.

The protein belongs to the glycosyltransferase 20 family. In terms of assembly, homotetramer.

The enzyme catalyses D-glucose 6-phosphate + UDP-alpha-D-glucose = alpha,alpha-trehalose 6-phosphate + UDP + H(+). It participates in glycan biosynthesis; trehalose biosynthesis. Functionally, probably involved in the osmoprotection via the biosynthesis of trehalose. Catalyzes the transfer of glucose from UDP-alpha-D-glucose (UDP-Glc) to D-glucose 6-phosphate (Glc-6-P) to form trehalose-6-phosphate. Acts with retention of the anomeric configuration of the UDP-sugar donor. The polypeptide is Trehalose-6-phosphate synthase (Escherichia coli O9:H4 (strain HS)).